Consider the following 550-residue polypeptide: Chaperonin GroEL (550 aa).

Residues 30 to 33 (TLGP), Lys-51, 87 to 91 (DGTTT), Gly-415, and Asp-496 each bind ATP.

Belongs to the chaperonin (HSP60) family. Forms a cylinder of 14 subunits composed of two heptameric rings stacked back-to-back. Interacts with the co-chaperonin GroES.

The protein resides in the cytoplasm. The catalysed reaction is ATP + H2O + a folded polypeptide = ADP + phosphate + an unfolded polypeptide.. Together with its co-chaperonin GroES, plays an essential role in assisting protein folding. The GroEL-GroES system forms a nano-cage that allows encapsulation of the non-native substrate proteins and provides a physical environment optimized to promote and accelerate protein folding. In Rickettsia prowazekii (strain Madrid E), this protein is Chaperonin GroEL.